A 507-amino-acid chain; its full sequence is Rhomboid protease GluP (507 aa).

5 consecutive transmembrane segments (helical) span residues 179–199, 229–249, 261–281, 283–303, and 312–332; these read FTYLFIALQILMFFLLEINGG, IVLHIGIAHLAFNTLALWSVG, FLLIYLAAGITGSIASFVFSP, PSAGASGAIFGCLGALLYVAL, and TIGTNIIVIIIINLGFGFAVS. Ser288 (nucleophile) is an active-site residue. Catalysis depends on His339, which acts as the Charge relay system. Helical transmembrane passes span 340–360 and 365–385; these read IGGLIGGFFAAAALGLPKAGA and LLSAVLLIALAVGFLYYGLHS. 2 TPR repeats span residues 424 to 457 and 458 to 491; these read ADLLKILAVSDIQIGEYDQAVSLLERAVKKEPKD and HASYYNLALLYAEKNELAQAEKAIQTAVKLKPKE.

Belongs to the peptidase S54 family.

The protein localises to the cell membrane. The enzyme catalyses Cleaves type-1 transmembrane domains using a catalytic dyad composed of serine and histidine that are contributed by different transmembrane domains.. With respect to regulation, inhibited by dichloroisocoumarin (DCI) and N-p-tosyl-L-phenylalanine chloromethyl ketone (TPCK), but not by other serine protease inhibitors such as sulfonyl fluoride PMSF and 4-(2-aminoethyl)benzenesulfonyl fluoride (AEBSF). Its function is as follows. Rhomboid-type serine protease that catalyzes intramembrane proteolysis. Important for normal cell division and sporulation. May act as a glucose exporter. The sequence is that of Rhomboid protease GluP (gluP) from Bacillus subtilis (strain 168).